A 329-amino-acid polypeptide reads, in one-letter code: Transmembrane protein I329L (329 aa).

An N-terminal signal peptide occupies residues 1–31 (MLRVFIFFVFLGSGLAGRIKPQITCKYFISE). N-linked (GlcNAc...) asparagine; by host glycans are attached at residues Asn32, Asn39, Asn44, Asn76, Asn82, and Asn101. The Extracellular portion of the chain corresponds to 32–239 (NNTWYKYNVT…NTERYKNCYP (208 aa)). The stretch at 112 to 133 (ELKFLDLRYNNLQFIDYNILRK) is one LRR repeat. Asn185 and Asn219 each carry an N-linked (GlcNAc...) asparagine; by host glycan. An intrachain disulfide couples Cys195 to Cys237. Residues 240–260 (FVLVSILCSCISFLFLIICLL) form a helical membrane-spanning segment. The Cytoplasmic segment spans residues 261–329 (RSICKKYSCT…EKKASCSRRK (69 aa)).

This sequence belongs to the asfivirus I329L family. In terms of processing, highly glycosylated.

It localises to the host endoplasmic reticulum membrane. It is found in the host Golgi apparatus membrane. In terms of biological role, viral TLR3 homolog that probably prevents TLR3 dimerization and subsequent induction of IFN. Inhibits dsRNA-stimulated activation of NF-kB and IRF3. The sequence is that of Transmembrane protein I329L from Ornithodoros (relapsing fever ticks).